Consider the following 83-residue polypeptide: Small ribosomal subunit protein uS17 (83 aa).

Belongs to the universal ribosomal protein uS17 family. As to quaternary structure, part of the 30S ribosomal subunit.

One of the primary rRNA binding proteins, it binds specifically to the 5'-end of 16S ribosomal RNA. This is Small ribosomal subunit protein uS17 from Thermodesulfovibrio yellowstonii (strain ATCC 51303 / DSM 11347 / YP87).